The following is a 334-amino-acid chain: Ornithine carbamoyltransferase (334 aa).

Carbamoyl phosphate-binding positions include 57–60, Gln84, Arg108, and 135–138; these read STRT and HPTQ. L-ornithine contacts are provided by residues Asn168, Asp233, and 237–238; that span reads SM. Residues 275–276 and Arg320 contribute to the carbamoyl phosphate site; that span reads CL.

It belongs to the aspartate/ornithine carbamoyltransferase superfamily. OTCase family.

The protein localises to the cytoplasm. It carries out the reaction carbamoyl phosphate + L-ornithine = L-citrulline + phosphate + H(+). Its pathway is amino-acid biosynthesis; L-arginine biosynthesis; L-arginine from L-ornithine and carbamoyl phosphate: step 1/3. Its function is as follows. Reversibly catalyzes the transfer of the carbamoyl group from carbamoyl phosphate (CP) to the N(epsilon) atom of ornithine (ORN) to produce L-citrulline. The polypeptide is Ornithine carbamoyltransferase (Thermobifida fusca (strain YX)).